Consider the following 148-residue polypeptide: Hemoglobin subunit beta (148 aa).

The 146-residue stretch at 3-148 (XWTDXERHVI…AVAALGKQYH (146 aa)) folds into the Globin domain. Heme b contacts are provided by His-64 and His-93.

It belongs to the globin family. As to quaternary structure, heterotetramer of two alpha chains and two beta chains. Red blood cells.

In terms of biological role, involved in oxygen transport from gills to the various peripheral tissues. The sequence is that of Hemoglobin subunit beta (hbb) from Silurus asotus (Amur catfish).